The primary structure comprises 218 residues: UPF0502 protein VS_II0353 (218 aa).

This sequence belongs to the UPF0502 family.

This is UPF0502 protein VS_II0353 from Vibrio atlanticus (strain LGP32) (Vibrio splendidus (strain Mel32)).